The primary structure comprises 413 residues: Arginine biosynthesis bifunctional protein ArgJ (413 aa).

6 residues coordinate substrate: T160, K186, T197, E284, N408, and S413. T197 (nucleophile) is an active-site residue.

It belongs to the ArgJ family. Heterotetramer of two alpha and two beta chains.

The protein resides in the cytoplasm. The enzyme catalyses N(2)-acetyl-L-ornithine + L-glutamate = N-acetyl-L-glutamate + L-ornithine. The catalysed reaction is L-glutamate + acetyl-CoA = N-acetyl-L-glutamate + CoA + H(+). It participates in amino-acid biosynthesis; L-arginine biosynthesis; L-ornithine and N-acetyl-L-glutamate from L-glutamate and N(2)-acetyl-L-ornithine (cyclic): step 1/1. It functions in the pathway amino-acid biosynthesis; L-arginine biosynthesis; N(2)-acetyl-L-ornithine from L-glutamate: step 1/4. Catalyzes two activities which are involved in the cyclic version of arginine biosynthesis: the synthesis of N-acetylglutamate from glutamate and acetyl-CoA as the acetyl donor, and of ornithine by transacetylation between N(2)-acetylornithine and glutamate. This Burkholderia mallei (strain ATCC 23344) protein is Arginine biosynthesis bifunctional protein ArgJ.